A 291-amino-acid chain; its full sequence is Elongation factor Ts (291 aa).

Positions 79 to 82 are involved in Mg(2+) ion dislocation from EF-Tu; the sequence is TDFV.

The protein belongs to the EF-Ts family.

It is found in the cytoplasm. Functionally, associates with the EF-Tu.GDP complex and induces the exchange of GDP to GTP. It remains bound to the aminoacyl-tRNA.EF-Tu.GTP complex up to the GTP hydrolysis stage on the ribosome. The sequence is that of Elongation factor Ts from Ruegeria pomeroyi (strain ATCC 700808 / DSM 15171 / DSS-3) (Silicibacter pomeroyi).